A 517-amino-acid chain; its full sequence is Maturase K (517 aa).

It belongs to the intron maturase 2 family. MatK subfamily.

Its subcellular location is the plastid. The protein localises to the chloroplast. Its function is as follows. Usually encoded in the trnK tRNA gene intron. Probably assists in splicing its own and other chloroplast group II introns. The polypeptide is Maturase K (Caryota mitis (Burmese fishtail palm)).